We begin with the raw amino-acid sequence, 144 residues long: MEMNEITVDNETMAHIAIFEKIARIELMECVENEDMILFVVGEHKMAEMFRKNKEVISQLKEKINKHILVAEVSRDLLTFVRNIFFRYGVNEIQISWKNNRTDIVVGVKPEEIGKVIGKEGKNIKLFKDAVSRYFNVNSISVKQ.

Residues 101–144 form the KH domain; it reads RTDIVVGVKPEEIGKVIGKEGKNIKLFKDAVSRYFNVNSISVKQ.

It belongs to the NusA family.

It localises to the cytoplasm. Its function is as follows. Participates in transcription termination. The sequence is that of Probable transcription termination protein NusA from Thermoplasma acidophilum (strain ATCC 25905 / DSM 1728 / JCM 9062 / NBRC 15155 / AMRC-C165).